A 336-amino-acid polypeptide reads, in one-letter code: Holliday junction branch migration complex subunit RuvB (336 aa).

Residues 1–182 are large ATPase domain (RuvB-L); the sequence is MKERIVNLET…FGMSFRMQFY (182 aa). ATP-binding positions include Leu-21, Arg-22, Gly-63, Lys-66, Thr-67, Ser-68, 129–131, Arg-172, Tyr-182, and Arg-219; that span reads EDF. Residue Thr-67 participates in Mg(2+) binding. The interval 183 to 253 is small ATPAse domain (RuvB-S); sequence NPSELALIIK…ITLHALNELG (71 aa). Residues 256–336 are head domain (RuvB-H); it reads ELGFDEADLA…IPTLNPQTLF (81 aa). Arg-310 and Arg-315 together coordinate DNA.

Belongs to the RuvB family. As to quaternary structure, homohexamer. Forms an RuvA(8)-RuvB(12)-Holliday junction (HJ) complex. HJ DNA is sandwiched between 2 RuvA tetramers; dsDNA enters through RuvA and exits via RuvB. An RuvB hexamer assembles on each DNA strand where it exits the tetramer. Each RuvB hexamer is contacted by two RuvA subunits (via domain III) on 2 adjacent RuvB subunits; this complex drives branch migration. In the full resolvosome a probable DNA-RuvA(4)-RuvB(12)-RuvC(2) complex forms which resolves the HJ.

The protein localises to the cytoplasm. It carries out the reaction ATP + H2O = ADP + phosphate + H(+). In terms of biological role, the RuvA-RuvB-RuvC complex processes Holliday junction (HJ) DNA during genetic recombination and DNA repair, while the RuvA-RuvB complex plays an important role in the rescue of blocked DNA replication forks via replication fork reversal (RFR). RuvA specifically binds to HJ cruciform DNA, conferring on it an open structure. The RuvB hexamer acts as an ATP-dependent pump, pulling dsDNA into and through the RuvAB complex. RuvB forms 2 homohexamers on either side of HJ DNA bound by 1 or 2 RuvA tetramers; 4 subunits per hexamer contact DNA at a time. Coordinated motions by a converter formed by DNA-disengaged RuvB subunits stimulates ATP hydrolysis and nucleotide exchange. Immobilization of the converter enables RuvB to convert the ATP-contained energy into a lever motion, pulling 2 nucleotides of DNA out of the RuvA tetramer per ATP hydrolyzed, thus driving DNA branch migration. The RuvB motors rotate together with the DNA substrate, which together with the progressing nucleotide cycle form the mechanistic basis for DNA recombination by continuous HJ branch migration. Branch migration allows RuvC to scan DNA until it finds its consensus sequence, where it cleaves and resolves cruciform DNA. This Helicobacter pylori (strain ATCC 700392 / 26695) (Campylobacter pylori) protein is Holliday junction branch migration complex subunit RuvB.